The primary structure comprises 401 residues: Proline-rich protein 30 (401 aa).

Positions 69-80 (PGPHFSSDSNSD) are enriched in polar residues. 3 disordered regions span residues 69 to 93 (PGPH…PRSS), 129 to 191 (SSSL…RGAG), and 357 to 401 (QSPK…KSPS). Low complexity-rich tracts occupy residues 83 to 93 (PPHSSSHPRSS) and 129 to 147 (SSSL…QSPS). Polar residues-rich tracts occupy residues 148 to 186 (RLQD…SIKS) and 357 to 368 (QSPKPSQCSRSL).

This chain is Proline-rich protein 30 (Prr30), found in Mus musculus (Mouse).